Consider the following 272-residue polypeptide: Cerberus (272 aa).

Residues 1–19 (MSLLLLQLLVLSCLGDTEP) form the signal peptide. Disulfide bonds link C168–C215, C182–C229, C192–C245, and C196–C247. Residues 168–253 (CRTLPFSQSV…ECNCETQKIE (86 aa)) enclose the CTCK domain. N228 is a glycosylation site (N-linked (GlcNAc...) asparagine).

Belongs to the DAN family.

It is found in the secreted. Functionally, cytokine that acts as a regulator of the activity of Nodal/BMP pathways during the establishment of bilateral asymmetry in the head and trunk of the embryo. The polypeptide is Cerberus (CER1) (Gallus gallus (Chicken)).